Consider the following 489-residue polypeptide: UDP-N-acetylmuramoyl-L-alanyl-D-glutamate--2,6-diaminopimelate ligase (489 aa).

Ser-34 is a UDP-N-acetyl-alpha-D-muramoyl-L-alanyl-D-glutamate binding site. Residue 110 to 116 (GTAGKTS) participates in ATP binding. Residues 152 to 153 (TT), Ser-179, Gln-185, and Arg-187 contribute to the UDP-N-acetyl-alpha-D-muramoyl-L-alanyl-D-glutamate site. Lys-219 is modified (N6-carboxylysine). Meso-2,6-diaminopimelate-binding positions include Arg-383, 407 to 410 (DNPR), Gly-455, and Glu-459. The short motif at 407 to 410 (DNPR) is the Meso-diaminopimelate recognition motif element.

It belongs to the MurCDEF family. MurE subfamily. The cofactor is Mg(2+). Carboxylation is probably crucial for Mg(2+) binding and, consequently, for the gamma-phosphate positioning of ATP.

It localises to the cytoplasm. The enzyme catalyses UDP-N-acetyl-alpha-D-muramoyl-L-alanyl-D-glutamate + meso-2,6-diaminopimelate + ATP = UDP-N-acetyl-alpha-D-muramoyl-L-alanyl-gamma-D-glutamyl-meso-2,6-diaminopimelate + ADP + phosphate + H(+). It functions in the pathway cell wall biogenesis; peptidoglycan biosynthesis. Catalyzes the addition of meso-diaminopimelic acid to the nucleotide precursor UDP-N-acetylmuramoyl-L-alanyl-D-glutamate (UMAG) in the biosynthesis of bacterial cell-wall peptidoglycan. In Agrobacterium fabrum (strain C58 / ATCC 33970) (Agrobacterium tumefaciens (strain C58)), this protein is UDP-N-acetylmuramoyl-L-alanyl-D-glutamate--2,6-diaminopimelate ligase.